A 919-amino-acid chain; its full sequence is TRPM8 channel-associated factor 2 (919 aa).

The region spanning 543 to 842 (DVWMSTGLYL…TYLQLQEVFG (300 aa)) is the Peptidase M60 domain.

This sequence belongs to the TCAF family. As to quaternary structure, interacts with TRPM8 (via N-terminus and C-terminus domains); the interaction inhibits TRPM8 channel activity. Interacts with TRPV6.

The protein resides in the cell membrane. Negatively regulates the plasma membrane cation channel TRPM8 activity. Involved in the recruitment of TRPM8 to the cell surface. Promotes prostate cancer cell migration stimulation in a TRPM8-dependent manner. The polypeptide is TRPM8 channel-associated factor 2 (Mus musculus (Mouse)).